The sequence spans 203 residues: RNA annealing protein YRA2 (203 aa).

Met-1 is subject to N-acetylmethionine. Disordered regions lie at residues 1–60 (MDKA…REEP) and 137–203 (QPQR…YMKG). Polar residues predominate over residues 11–20 (NSHTDSSSNH). The segment covering 47–60 (SRSKDRLYREREEP) has biased composition (basic and acidic residues). The RRM domain occupies 64–138 (KRIRISKIPL…AKIEVEIYQP (75 aa)). Residues 139–153 (QRKHSRMNAHNRRKQ) are compositionally biased toward basic residues. Residues 154-164 (TAQEHGRDRPG) show a composition bias toward basic and acidic residues. Basic residues predominate over residues 165-180 (SHYRQKPNRVSKKNKG).

The protein belongs to the YRA1 family. Associates with mRNPs. Interacts with YRA1.

It is found in the nucleus. Its function is as follows. Involved in export of poly(A) mRNAs from the nucleus. Recruited to the coding sequences as well as poly-A sites of active genes. This chain is RNA annealing protein YRA2 (YRA2), found in Saccharomyces cerevisiae (strain YJM789) (Baker's yeast).